The sequence spans 1038 residues: Isoleucine--tRNA ligase (1038 aa).

Positions 47 to 57 (PFATGLPHYGH) match the 'HIGH' region motif. Positions 591–595 (KMSKR) match the 'KMSKS' region motif. K594 provides a ligand contact to ATP.

Belongs to the class-I aminoacyl-tRNA synthetase family. IleS type 2 subfamily. In terms of assembly, monomer. The cofactor is Zn(2+).

The protein resides in the cytoplasm. The catalysed reaction is tRNA(Ile) + L-isoleucine + ATP = L-isoleucyl-tRNA(Ile) + AMP + diphosphate. In terms of biological role, catalyzes the attachment of isoleucine to tRNA(Ile). As IleRS can inadvertently accommodate and process structurally similar amino acids such as valine, to avoid such errors it has two additional distinct tRNA(Ile)-dependent editing activities. One activity is designated as 'pretransfer' editing and involves the hydrolysis of activated Val-AMP. The other activity is designated 'posttransfer' editing and involves deacylation of mischarged Val-tRNA(Ile). The protein is Isoleucine--tRNA ligase of Protochlamydia amoebophila (strain UWE25).